A 712-amino-acid chain; its full sequence is Exocyst complex component EXO70I (712 aa).

Positions 1–18 are cleaved as a signal peptide; sequence MHKKQLMALLMVPQTSDS. Residues 26-53 are a coiled coil; it reads LESAYSDLESLLRSSKQMEQNIETMETR. Residue asparagine 111 is glycosylated (N-linked (GlcNAc...) asparagine).

Belongs to the EXO70 family. In terms of assembly, subunit of the exocyst complex that mediates vesicle tethering during exocytosis. Interacts with VPY at the periarbuscular membrane (PAM) around the arbuscule hyphal tips. As to expression, present at low levels in non-mycorrhizal root tips.

It localises to the cell membrane. Functionally, component of an exocyst subcomplex specifically required for periarbuscular membrane (PAM) biogenesis during arbuscular mycorrhizal (AM) symbiosis with AM fungi (e.g. Glomus versiforme), especially critical during the early branching phase of arbuscule development; probably involved in STR and STR2 delivery into the PAM. This chain is Exocyst complex component EXO70I, found in Medicago truncatula (Barrel medic).